The primary structure comprises 74 residues: Serine rich endogenous peptide 23 (74 aa).

Positions 1 to 25 (MNKVVVYVLALSILLFFGLPNTTLA) are cleaved as a signal peptide. The SCOOP motif motif lies at 52–66 (KIAVGGSDSVRAHSK). A SxS motif essential for MIK2 binding motif is present at residues 58–60 (SDS).

It belongs to the serine rich endogenous peptide (SCOOP) phytocytokine family. In terms of assembly, interacts with MIK2 (via extracellular leucine-rich repeat domain); this interaction triggers the formation of complex between MIK2 and the BAK1/SERK3 and SERK4 coreceptors, and subsequent BAK1 activation by phosphorylation. As to expression, mostly expressed in roots, and, to a lower extent, in seedlings shoots.

It localises to the cell membrane. Its subcellular location is the secreted. It is found in the extracellular space. The protein localises to the apoplast. Brassicaceae-specific phytocytokine (plant endogenous peptide released into the apoplast) perceived by MIK2 in a BAK1/SERK3 and SERK4 coreceptors-dependent manner, that modulates various physiological and antimicrobial processes including growth prevention and reactive oxygen species (ROS) response regulation. Inhibits root growth. This is Serine rich endogenous peptide 23 from Arabidopsis thaliana (Mouse-ear cress).